The primary structure comprises 327 residues: GDP-mannose transporter (327 aa).

Residues 1–4 lie on the Cytoplasmic side of the membrane; it reads MESS. A helical transmembrane segment spans residues 5-25; sequence LAAIANSGPISIFSYCVSSIL. Topologically, residues 26–36 are lumenal; the sequence is MTVTNKYVLSG. Residues 37–57 traverse the membrane as a helical segment; it reads FSFNMNFLLLAVQSIVCIVTI. Over 58–78 the chain is Cytoplasmic; sequence GSLKSFGVITYRQFNKEEARK. A helical transmembrane segment spans residues 79 to 93; that stretch reads WSPIAVLLVIMIYTS. At 94–102 the chain is on the lumenal side; it reads SKALQYLSI. A helical membrane pass occupies residues 103–125; the sequence is PVYTIFKNLTIILIAYGEVLWFG. At 126–131 the chain is on the cytoplasmic side; the sequence is GKVTTM. The helical transmembrane segment at 132-149 threads the bilayer; it reads ALSSFLLMVFSSVVAWYG. Residues 150–163 lie on the Lumenal side of the membrane; sequence DEAVSGSGNESFIA. A glycan (N-linked (GlcNAc...) asparagine) is linked at Asn158. Residues 164-184 form a helical membrane-spanning segment; sequence LYLGYFWMATNCFASAAFVLI. Residues 185–207 are Cytoplasmic-facing; that stretch reads MRKRIKLTNFKDFDTMYYNNLLS. The helical transmembrane segment at 208 to 228 threads the bilayer; that stretch reads IPILLASSIIFEDWSAENLAV. At 229 to 238 the chain is on the lumenal side; the sequence is NFPSDNRTAT. N-linked (GlcNAc...) asparagine glycosylation occurs at Asn234. A helical membrane pass occupies residues 239–259; sequence IAAMVLSGASSVGISYCSAWC. Over 260–266 the chain is Cytoplasmic; that stretch reads VRVTSST. A helical transmembrane segment spans residues 267–289; sequence TYSMVGALNKLPIALSGLVFFPA. Topologically, residues 290-292 are lumenal; it reads AVN. The chain crosses the membrane as a helical span at residues 293-312; it reads FWSVASIFVGFAAGLVYAVA. The Cytoplasmic portion of the chain corresponds to 313 to 327; the sequence is KQRQQKENVSLPSSK.

This sequence belongs to the TPT transporter family. SLC35D subfamily. As to quaternary structure, homooligomer.

Its subcellular location is the golgi apparatus membrane. It localises to the cytoplasmic vesicle membrane. The protein resides in the endoplasmic reticulum membrane. Its function is as follows. Involved in the import of GDP-mannose from the cytoplasm into the Golgi lumen. This chain is GDP-mannose transporter (VRG4), found in Scheffersomyces stipitis (strain ATCC 58785 / CBS 6054 / NBRC 10063 / NRRL Y-11545) (Yeast).